Consider the following 267-residue polypeptide: MPELPEVELTRRRLERELTGKRIDRVVVRTPKLRFPIPQELHVSLPGRTVRSVGRRGKYLLFDCETGWLIVHLGMTGFLRLVAGTAPPGKHDHLDIVFADGTVLRFHDPRKFGTVAWTTDAPATHPLLAAIGPEPLTATFDGAYLFAVTRTRRVAVKQLLMNAAIVAGVGNIYANEALFRAGIRPDRPASSLGRPECERLARTVREVLQESIDQGSTYRVEEETVAYHPLNFDVYGRGTDACTRCGGALEEIRLGNRSTVFCPRCQT.

The active-site Schiff-base intermediate with DNA is the proline 2. Glutamate 3 serves as the catalytic Proton donor. Lysine 58 functions as the Proton donor; for beta-elimination activity in the catalytic mechanism. Residues histidine 91, arginine 110, and arginine 152 each coordinate DNA. The FPG-type zinc finger occupies 233 to 267 (DVYGRGTDACTRCGGALEEIRLGNRSTVFCPRCQT). The active-site Proton donor; for delta-elimination activity is the arginine 257.

The protein belongs to the FPG family. In terms of assembly, monomer. It depends on Zn(2+) as a cofactor.

It carries out the reaction Hydrolysis of DNA containing ring-opened 7-methylguanine residues, releasing 2,6-diamino-4-hydroxy-5-(N-methyl)formamidopyrimidine.. It catalyses the reaction 2'-deoxyribonucleotide-(2'-deoxyribose 5'-phosphate)-2'-deoxyribonucleotide-DNA = a 3'-end 2'-deoxyribonucleotide-(2,3-dehydro-2,3-deoxyribose 5'-phosphate)-DNA + a 5'-end 5'-phospho-2'-deoxyribonucleoside-DNA + H(+). Involved in base excision repair of DNA damaged by oxidation or by mutagenic agents. Acts as a DNA glycosylase that recognizes and removes damaged bases. Has a preference for oxidized purines, such as 7,8-dihydro-8-oxoguanine (8-oxoG). Has AP (apurinic/apyrimidinic) lyase activity and introduces nicks in the DNA strand. Cleaves the DNA backbone by beta-delta elimination to generate a single-strand break at the site of the removed base with both 3'- and 5'-phosphates. The chain is Formamidopyrimidine-DNA glycosylase from Geobacter metallireducens (strain ATCC 53774 / DSM 7210 / GS-15).